A 170-amino-acid polypeptide reads, in one-letter code: Lipoprotein signal peptidase (170 aa).

A run of 4 helical transmembrane segments spans residues 11–31 (LGWLWLSVLVLVIDQVSKLHF), 41–61 (IVVIPDYFSWTLAYNTGAAFS), 69–89 (WQRWLFALIAIAVSAVLVVWL), and 95–115 (NETWLAIALALVLGGALGNLY). Catalysis depends on residues Asp-125 and Asp-144. The helical transmembrane segment at 136–156 (YFPAFNFADSAITVGAVMLAL) threads the bilayer.

The protein belongs to the peptidase A8 family.

The protein localises to the cell inner membrane. The catalysed reaction is Release of signal peptides from bacterial membrane prolipoproteins. Hydrolyzes -Xaa-Yaa-Zaa-|-(S,diacylglyceryl)Cys-, in which Xaa is hydrophobic (preferably Leu), and Yaa (Ala or Ser) and Zaa (Gly or Ala) have small, neutral side chains.. The protein operates within protein modification; lipoprotein biosynthesis (signal peptide cleavage). Functionally, this protein specifically catalyzes the removal of signal peptides from prolipoproteins. This chain is Lipoprotein signal peptidase, found in Pseudomonas fluorescens (strain ATCC BAA-477 / NRRL B-23932 / Pf-5).